The following is a 537-amino-acid chain: P2Y purinoceptor 4 (537 aa).

Residues 1 to 49 (MTEDIMATSYPTFLTTPYLPMKLLMNLTNDTEDICVFDEGFKFLLLPVS) are Extracellular-facing. N-linked (GlcNAc...) asparagine glycosylation is found at Asn26 and Asn29. The helical transmembrane segment at 50 to 70 (YSAVFMVGLPLNIAAMWIFIA) threads the bilayer. Residues 71-79 (KMRPWNPTT) lie on the Cytoplasmic side of the membrane. A helical transmembrane segment spans residues 80-100 (VYMFNLALSDTLYVLSLPTLV). At 101-118 (YYYADKNNWPFGEVLCKL) the chain is on the extracellular side. An intrachain disulfide couples Cys116 to Cys193. Residues 119-139 (VRFLFYANLYSSILFLTCISV) form a helical membrane-spanning segment. Over 140 to 161 (HRYRGVCHPITSLRRMNAKHAY) the chain is Cytoplasmic. Residues 162–182 (VICALVWLSVTLCLVPNLIFV) traverse the membrane as a helical segment. Residues 183–210 (TVSPKVKNTICHDTTRPEDFARYVEYST) are Extracellular-facing. Residues 211–231 (AIMCLLFGIPCLIIAGCYGLM) traverse the membrane as a helical segment. Topologically, residues 232–254 (TRELMKPIVSGNQQTLPSYKKRS) are cytoplasmic. A helical transmembrane segment spans residues 255-275 (IKTIIFVMIAFAICFMPFHIT). Topologically, residues 276 to 292 (RTLYYYARLLGIKCYAL) are extracellular. A helical transmembrane segment spans residues 293–316 (NVINVTYKVTRPLASANSCIDPIL). Residues 317–537 (YFLANDRYRR…EKELQNFPKA (221 aa)) are Cytoplasmic-facing. A disordered region spans residues 401–505 (NRRSTIKRNS…GEGTSTWNLL (105 aa)). Basic and acidic residues-rich tracts occupy residues 409 to 423 (NSTD…RHGE) and 431 to 447 (VVEK…RKTT). Positions 448 to 465 (EQSSKTNAEQDELQTQID) are enriched in polar residues.

Belongs to the G-protein coupled receptor 1 family.

Its subcellular location is the cell membrane. Functionally, receptor for extracellular ATP, UTP, CTP, GTP and ITP. The activity of this receptor is mediated by G proteins which activate a phosphatidylinositol-calcium second messenger system. May play a key role in the early development of neural tissue. In Xenopus laevis (African clawed frog), this protein is P2Y purinoceptor 4 (p2ry4).